A 75-amino-acid chain; its full sequence is AAPLVAETDANAKSLGYVADTTKADKTKYPKHTKDQSCSTCALYQGKTAPQGACPLFAGKEVVAKGWCSAWAKKA.

[4Fe-4S] cluster is bound by residues Cys38, Cys41, Cys54, and Cys68.

Homodimer. Monomer at different ionic strengths.

Functionally, specific class of high-redox-potential 4Fe-4S ferredoxins. Functions in anaerobic electron transport in most purple and in some other photosynthetic bacteria and in at least one genus (Paracoccus) of halophilic, denitrifying bacteria. Competent in photosynthetic electron transfer to oxidized cytochrome bc1 complex via the membrane-bound c-type tetraheme. The polypeptide is High-potential iron-sulfur protein (hip) (Rhodoferax fermentans).